A 248-amino-acid chain; its full sequence is Conoporin-Cn1 (248 aa).

An N-terminal signal peptide occupies residues 1–23; sequence MGVQFPALKTMVTVFLLLMGNMS. The segment at 45–64 is N-terminal region; sequence TPGSSLYGVALKDLADTSYN. Residues G120, S138, P140, Y167, and Y171 each coordinate phosphocholine.

It belongs to the actinoporin family. Conoidea subfamily. Octamer or nonamer in membranes. Monomer in the soluble state. 9 isoforms are detected in the injectable venom, mainly corresponding to different oxidative states. Expressed by the venom duct.

It is found in the secreted. It localises to the nematocyst. The protein localises to the target cell membrane. In terms of biological role, pore-forming protein that forms pores of around 1 nm and causes cardiac stimulation and cytolysis. This chain is Conoporin-Cn1, found in Conus consors (Singed cone).